Here is a 531-residue protein sequence, read N- to C-terminus: MDGIVTEVAVGVKRGSDELLSGSVLSSPNSNMSGMVVTANGNDSKKFKGEDKMDGAPSRVLHIRKLPGEVTETEVIALGLPFGKVTNILMLKGKNQAFLELATEEAAITMVNYYSAVTPHLRNQPIYIQYSNHKELKTDNTLNQRAQVVLQAVTAVQTANTPLSGTTVSESAVTPAQSPVLRIIIDNMYYPVTLDVLHQIFSKFGAVLKIITFTKNNQFQALLQYGDPVNAQQAKLALDGQNIYNACCTLRIDFSKLVNLNVKYNNDKSRDYTRPDLPSGDGQPALDPAIAAAFAKETSLLAVPGALSPLAIPNAAAAAAAAAAGRVGMPGVSAGGNTVLLVSNLNEEMVTPQSLFTLFGVYGDVQRVKILYNKKDSALIQMADGNQSQLAMNHLNGQKMYGKIIRVTLSKHQTVQLPREGLDDQGLTKDFGNSPLHRFKKPGSKNFQNIFPPSATLHLSNIPPSVAEEDLRTLFANTGGTVKAFKFFQDHKMALLQMATVEEAIQALIDLHNYNLGENHHLRVSFSKSTI.

Methionine 1 bears the N-acetylmethionine mark. Phosphoserine occurs at positions 26 and 27. RRM domains lie at 59–133 and 181–257; these read RVLH…YSNH and LRII…FSKL. Serine 308 carries the post-translational modification Phosphoserine. 2 RRM domains span residues 338–412 and 455–529; these read TVLL…LSKH and ATLH…FSKS.

In terms of assembly, monomer. Interacts with NOVA1; the interaction is direct. Identified in a mRNP complex, at least composed of DHX9, DDX3X, ELAVL1, HNRNPU, IGF2BP1, ILF3, PABPC1, PCBP2, PTBP2, STAU1, STAU2, SYNCRIP and YBX1. Part of a ternary complex containing KHSRP and HNRPH1. Interacts with NOVA2; the interaction is direct.

It is found in the nucleus. Its function is as follows. RNA-binding protein which binds to intronic polypyrimidine tracts and mediates negative regulation of exons splicing. May antagonize in a tissue-specific manner the ability of NOVA1 to activate exon selection. In addition to its function in pre-mRNA splicing, plays also a role in the regulation of translation. The sequence is that of Polypyrimidine tract-binding protein 2 from Rattus norvegicus (Rat).